A 159-amino-acid chain; its full sequence is MEKIPSFQLDHIRLKRGIYVSRKDYIGGEVVTTFDIRMKEPNREPVLGAPELHTIEHLAATYLRNHPLYKDRIVFWGPMGCLTGNYFLMRGNYVSKDILPLMQETFRFIRDFEGEVPGTEPRDCGNCLLHNLPMAKYEAEKYLREVLDVATEENLNYPD.

Residues His-53, His-57, and Cys-124 each coordinate Fe cation.

Belongs to the LuxS family. As to quaternary structure, homodimer. The cofactor is Fe cation.

The catalysed reaction is S-(5-deoxy-D-ribos-5-yl)-L-homocysteine = (S)-4,5-dihydroxypentane-2,3-dione + L-homocysteine. Involved in the synthesis of autoinducer 2 (AI-2) which is secreted by bacteria and is used to communicate both the cell density and the metabolic potential of the environment. The regulation of gene expression in response to changes in cell density is called quorum sensing. Catalyzes the transformation of S-ribosylhomocysteine (RHC) to homocysteine (HC) and 4,5-dihydroxy-2,3-pentadione (DPD). The sequence is that of S-ribosylhomocysteine lyase from Porphyromonas gingivalis (strain ATCC 33277 / DSM 20709 / CIP 103683 / JCM 12257 / NCTC 11834 / 2561).